A 366-amino-acid chain; its full sequence is Putative integrase/recombinase HI_1572 (366 aa).

Residues 54–133 (ITLDELIDKY…SLSALMAKTI (80 aa)) enclose the Core-binding (CB) domain. The Tyr recombinase domain occupies 168–331 (IFVSGYDVEH…DMAEGYKTKA (164 aa)). Catalysis depends on residues Arg-201, Lys-226, and His-308. Tyr-318 functions as the O-(3'-phospho-DNA)-tyrosine intermediate in the catalytic mechanism.

The protein belongs to the 'phage' integrase family.

The protein is Putative integrase/recombinase HI_1572 of Haemophilus influenzae (strain ATCC 51907 / DSM 11121 / KW20 / Rd).